Consider the following 535-residue polypeptide: CTP synthase (535 aa).

Residues 1–268 (MSTKYIFVTG…DQIVCDHLKL (268 aa)) are amidoligase domain. Residue Ser-14 participates in CTP binding. Ser-14 contributes to the UTP binding site. Residue 15 to 20 (SIGKGI) participates in ATP binding. Residue Tyr-55 participates in L-glutamine binding. Asp-72 contributes to the ATP binding site. Mg(2+)-binding residues include Asp-72 and Glu-142. CTP-binding positions include 149–151 (DIE), 189–194 (KTKPTQ), and Lys-225. Residues 189–194 (KTKPTQ) and Lys-225 each bind UTP. Positions 293–535 (KISLVGKYVE…FVTAAVENSN (243 aa)) constitute a Glutamine amidotransferase type-1 domain. Gly-355 lines the L-glutamine pocket. Residue Cys-382 is the Nucleophile; for glutamine hydrolysis of the active site. L-glutamine is bound by residues 383 to 386 (LGMQ), Glu-406, and Arg-464. Active-site residues include His-509 and Glu-511.

The protein belongs to the CTP synthase family. Homotetramer.

The enzyme catalyses UTP + L-glutamine + ATP + H2O = CTP + L-glutamate + ADP + phosphate + 2 H(+). It catalyses the reaction L-glutamine + H2O = L-glutamate + NH4(+). It carries out the reaction UTP + NH4(+) + ATP = CTP + ADP + phosphate + 2 H(+). It functions in the pathway pyrimidine metabolism; CTP biosynthesis via de novo pathway; CTP from UDP: step 2/2. With respect to regulation, allosterically activated by GTP, when glutamine is the substrate; GTP has no effect on the reaction when ammonia is the substrate. The allosteric effector GTP functions by stabilizing the protein conformation that binds the tetrahedral intermediate(s) formed during glutamine hydrolysis. Inhibited by the product CTP, via allosteric rather than competitive inhibition. Its function is as follows. Catalyzes the ATP-dependent amination of UTP to CTP with either L-glutamine or ammonia as the source of nitrogen. Regulates intracellular CTP levels through interactions with the four ribonucleotide triphosphates. The polypeptide is CTP synthase (Streptococcus pneumoniae (strain ATCC BAA-255 / R6)).